A 475-amino-acid polypeptide reads, in one-letter code: Subtilisin-like protease PopC (475 aa).

Disordered regions lie at residues 1 to 27 (MKSY…EQGE) and 57 to 106 (TLPG…QTGA). One can recognise a Peptidase S8 domain in the interval 165 to 475 (NRGMSSLAER…KTGKGLAVFR (311 aa)). Residues D201, H243, and S423 each act as charge relay system in the active site.

This sequence belongs to the peptidase S8 family. As to quaternary structure, interacts with PopD in non-starving cells.

Its subcellular location is the cytoplasm. The protein localises to the periplasm. The protein resides in the secreted. Its activity is regulated as follows. In non-starving cells, secretion and protease activity are inhibited by formation of a cytoplasmic complex with PopD. In response to starvation, PopD is degraded in a RelA- and FtsH(D)-dependent manner, thereby releasing pre-formed PopC for secretion. Secreted and active during starvation, and rapidly degraded upon secretion. Secretion is significantly and reversibly reduced by carbonyl cyanide m-chlorophenyl hydrazine (CCCP), which dissipates or reduces the proton motive force (PMF), and by nigericin, which affects the pH gradient. Functionally, required for fruiting body formation, a multicellular developmental program that is induced in response to starvation. Acts as a subtilisin-like protease that directly cleaves the CsgA precursor protein (p25) on the cell surface to generate the intercellular C-signal protein (p17) in starving cells. Preferentially acts in cis, i.e. PopC secreted by a cell only cleaves p25 on that cell. May also be important for processing of other protein(s) that are important for development. In Myxococcus xanthus (strain DK1622), this protein is Subtilisin-like protease PopC.